The primary structure comprises 1141 residues: Isoleucine--tRNA ligase, cytoplasmic (1141 aa).

A 'HIGH' region motif is present at residues 50-60 (PFATGLPHYGH). The 'KMSKS' region motif lies at 601–605 (KMSKS). Lys604 provides a ligand contact to ATP.

It belongs to the class-I aminoacyl-tRNA synthetase family.

It is found in the cytoplasm. It catalyses the reaction tRNA(Ile) + L-isoleucine + ATP = L-isoleucyl-tRNA(Ile) + AMP + diphosphate. This chain is Isoleucine--tRNA ligase, cytoplasmic, found in Caenorhabditis elegans.